The chain runs to 425 residues: uncharacterized protein (425 aa).

The region spanning Met-1–Lys-57 is the TRAM domain. [4Fe-4S] cluster-binding residues include Cys-70, Cys-76, Cys-79, and Cys-153. S-adenosyl-L-methionine-binding residues include Gln-260, Asp-308, and Asp-354. Cys-381 functions as the Nucleophile in the catalytic mechanism.

This sequence belongs to the class I-like SAM-binding methyltransferase superfamily. RNA M5U methyltransferase family.

This is an uncharacterized protein from Aquifex aeolicus (strain VF5).